A 604-amino-acid polypeptide reads, in one-letter code: Nuclear factor erythroid 2-related factor 2 (604 aa).

Residues 29-31 carry the DLG motif motif; it reads DLG. The residue at position 40 (serine 40) is a Phosphoserine; by PKC. The short motif at 79 to 82 is the ETGE motif element; the sequence is ETGE. The residue at position 214 (serine 214) is a Phosphoserine. A disordered region spans residues 334–447; sequence TVEFNDSDSG…VPFTKDKHSS (114 aa). 2 stretches are compositionally biased toward polar residues: residues 340 to 352 and 395 to 407; these read SDSG…SPSR and PTHS…QPLS. Lysine 461, lysine 471, and lysine 486 each carry an N-linked (Glc) (glycation) lysine glycan. The bZIP domain occupies 496–559; that stretch reads LIRDIRRRGK…HLLKRKLSTL (64 aa). A glycan (N-linked (Glc) (glycation) arginine) is linked at arginine 498. A basic motif region spans residues 498–517; that stretch reads RDIRRRGKNKVAAQNCRKRK. Positions 521–528 are leucine-zipper; that stretch reads IVELEQDL. N-linked (Glc) (glycation) arginine glycosylation occurs at arginine 568. A disordered region spans residues 570-604; it reads EDGKPYSPSEYSLQQTRDGNVFLVPKSKKPDTKKN. N-linked (Glc) (glycation) lysine glycosylation occurs at lysine 573. Polar residues predominate over residues 578 to 587; the sequence is SEYSLQQTRD. A mediates interaction with CHD6 and is necessary to activate transcription region spans residues 590-595; sequence VFLVPK. An N6-acetyllysine; by CREBBP mark is found at lysine 595 and lysine 598.

Belongs to the bZIP family. CNC subfamily. As to quaternary structure, heterodimer; heterodimerizes with small Maf proteins. Interacts (via the bZIP domain) with MAFG and MAFK; required for binding to antioxidant response elements (AREs) on DNA. Interacts with KEAP1; the interaction is direct and promotes ubiquitination by the BCR(KEAP1) E3 ubiquitin ligase complex. Forms a ternary complex with PGAM5 and KEAP1. Interacts with EEF1D at heat shock promoter elements (HSE). Interacts via its leucine-zipper domain with the coiled-coil domain of PMF1. Interacts with CHD6; involved in activation of the transcription. Interacts with ESRRB; represses NFE2L2 transcriptional activity. Interacts with MOTS-c, a peptide produced by the mitochondrially encoded 12S rRNA MT-RNR1; the interaction occurs in the nucleus following metabolic stress. Post-translationally, ubiquitinated in the cytoplasm by the BCR(KEAP1) E3 ubiquitin ligase complex leading to its degradation. In response to oxidative stress, electrophile metabolites, such as sulforaphane, modify KEAP1, leading to inhibit activity of the BCR(KEAP1) complex, promoting NFE2L2/NRF2 nuclear accumulation and activity. In response to autophagy, the BCR(KEAP1) complex is inactivated. In terms of processing, phosphorylated by EIF2AK3/PERK following unfolded protein response (UPR), promoting dissociation from its cytoplasmic inhibitor KEAP1, followed by its translocation into the nucleus. Phosphorylation of Ser-40 by PKC in response to oxidative stress dissociates NFE2L2 from its cytoplasmic inhibitor KEAP1, promoting its translocation into the nucleus. Acetylation at Lys-595 and Lys-598 increases nuclear localization whereas deacetylation by SIRT1 enhances cytoplasmic presence. Post-translationally, glycation impairs transcription factor activity by preventing heterodimerization with small Maf proteins. Deglycation by FN3K restores activity.

Its subcellular location is the cytoplasm. It localises to the cytosol. The protein resides in the nucleus. Functionally, transcription factor that plays a key role in the response to oxidative stress: binds to antioxidant response (ARE) elements present in the promoter region of many cytoprotective genes, such as phase 2 detoxifying enzymes, and promotes their expression, thereby neutralizing reactive electrophiles. In normal conditions, ubiquitinated and degraded in the cytoplasm by the BCR(KEAP1) complex. In response to oxidative stress, electrophile metabolites inhibit activity of the BCR(KEAP1) complex, promoting nuclear accumulation of NFE2L2/NRF2, heterodimerization with one of the small Maf proteins and binding to ARE elements of cytoprotective target genes. The NFE2L2/NRF2 pathway is also activated in response to selective autophagy: autophagy promotes interaction between KEAP1 and SQSTM1/p62 and subsequent inactivation of the BCR(KEAP1) complex, leading to NFE2L2/NRF2 nuclear accumulation and expression of cytoprotective genes. The NFE2L2/NRF2 pathway is also activated during the unfolded protein response (UPR), contributing to redox homeostasis and cell survival following endoplasmic reticulum stress. May also be involved in the transcriptional activation of genes of the beta-globin cluster by mediating enhancer activity of hypersensitive site 2 of the beta-globin locus control region. Also plays an important role in the regulation of the innate immune response. It is a critical regulator of the innate immune response and survival during sepsis by maintaining redox homeostasis and restraint of the dysregulation of pro-inflammatory signaling pathways like MyD88-dependent and -independent and TNF-alpha signaling. Suppresses macrophage inflammatory response by blocking pro-inflammatory cytokine transcription and the induction of IL6. Binds to the proximity of pro-inflammatory genes in macrophages and inhibits RNA Pol II recruitment. The inhibition is independent of the Nrf2-binding motif and reactive oxygen species level. Represses antiviral cytosolic DNA sensing by suppressing the expression of the adapter protein STING1 and decreasing responsiveness to STING1 agonists while increasing susceptibility to infection with DNA viruses. This Rattus norvegicus (Rat) protein is Nuclear factor erythroid 2-related factor 2.